Reading from the N-terminus, the 247-residue chain is Phosphatidylserine decarboxylase proenzyme (247 aa).

Ser-206 (schiff-base intermediate with substrate; via pyruvic acid) is an active-site residue. Ser-206 carries the post-translational modification Pyruvic acid (Ser); by autocatalysis.

This sequence belongs to the phosphatidylserine decarboxylase family. PSD-A subfamily. As to quaternary structure, heterodimer of a large membrane-associated beta subunit and a small pyruvoyl-containing alpha subunit. Pyruvate is required as a cofactor. Is synthesized initially as an inactive proenzyme. Formation of the active enzyme involves a self-maturation process in which the active site pyruvoyl group is generated from an internal serine residue via an autocatalytic post-translational modification. Two non-identical subunits are generated from the proenzyme in this reaction, and the pyruvate is formed at the N-terminus of the alpha chain, which is derived from the carboxyl end of the proenzyme. The post-translation cleavage follows an unusual pathway, termed non-hydrolytic serinolysis, in which the side chain hydroxyl group of the serine supplies its oxygen atom to form the C-terminus of the beta chain, while the remainder of the serine residue undergoes an oxidative deamination to produce ammonia and the pyruvoyl prosthetic group on the alpha chain.

The protein resides in the cell membrane. It catalyses the reaction a 1,2-diacyl-sn-glycero-3-phospho-L-serine + H(+) = a 1,2-diacyl-sn-glycero-3-phosphoethanolamine + CO2. It participates in phospholipid metabolism; phosphatidylethanolamine biosynthesis; phosphatidylethanolamine from CDP-diacylglycerol: step 2/2. In terms of biological role, catalyzes the formation of phosphatidylethanolamine (PtdEtn) from phosphatidylserine (PtdSer). This is Phosphatidylserine decarboxylase proenzyme from Nitrobacter winogradskyi (strain ATCC 25391 / DSM 10237 / CIP 104748 / NCIMB 11846 / Nb-255).